Here is a 71-residue protein sequence, read N- to C-terminus: Beta-defensin 2 (71 aa).

The signal sequence occupies residues methionine 1–proline 20. 3 disulfide bridges follow: cysteine 37–cysteine 66, cysteine 44–cysteine 59, and cysteine 49–cysteine 67.

This sequence belongs to the beta-defensin family. In terms of tissue distribution, kidney, uterus and to a lesser extent in heart.

Its subcellular location is the secreted. Has bactericidal activity. The protein is Beta-defensin 2 (Defb2) of Mus musculus (Mouse).